The chain runs to 100 residues: Urease subunit gamma (100 aa).

It belongs to the urease gamma subunit family. As to quaternary structure, heterotrimer of UreA (gamma), UreB (beta) and UreC (alpha) subunits. Three heterotrimers associate to form the active enzyme.

The protein resides in the cytoplasm. The catalysed reaction is urea + 2 H2O + H(+) = hydrogencarbonate + 2 NH4(+). It participates in nitrogen metabolism; urea degradation; CO(2) and NH(3) from urea (urease route): step 1/1. In Pseudomonas putida (strain W619), this protein is Urease subunit gamma.